The chain runs to 258 residues: Acetylglutamate kinase (258 aa).

Substrate is bound by residues 41-42 (GG), Arg63, and Asn156.

This sequence belongs to the acetylglutamate kinase family. ArgB subfamily.

The protein resides in the cytoplasm. It carries out the reaction N-acetyl-L-glutamate + ATP = N-acetyl-L-glutamyl 5-phosphate + ADP. The protein operates within amino-acid biosynthesis; L-arginine biosynthesis; N(2)-acetyl-L-ornithine from L-glutamate: step 2/4. Its function is as follows. Catalyzes the ATP-dependent phosphorylation of N-acetyl-L-glutamate. The protein is Acetylglutamate kinase of Bacillus amyloliquefaciens (Bacillus velezensis).